The primary structure comprises 419 residues: G protein-activated inward rectifier potassium channel 4 (419 aa).

Over 1–86 the chain is Cytoplasmic; that stretch reads MAGDSRNAMN…LFTTLVDLKW (86 aa). S5 carries the phosphoserine modification. A helical membrane pass occupies residues 87-111; that stretch reads RFNLLVFTMVYTITWLFFGFIWWLI. Over 112–135 the chain is Extracellular; the sequence is AYVRGDLDHVGDQEWIPCVENLSG. An intramembrane region (helical; Pore-forming) is located at residues 136 to 147; sequence FVSAFLFSIETE. The segment at residues 148-154 is an intramembrane region (pore-forming); sequence TTIGYGF. The Selectivity filter signature appears at 149 to 154; the sequence is TIGYGF. The Extracellular portion of the chain corresponds to 155 to 163; sequence RVITEKCPE. The chain crosses the membrane as a helical span at residues 164–185; sequence GIILLLVQAILGSIVNAFMVGC. The Cytoplasmic portion of the chain corresponds to 186-419; the sequence is MFVKISQPKK…SVSQATRGSM (234 aa). The disordered stretch occupies residues 388–419; sequence GCAEAGNEAEAEKDEEGEPNGLSVSQATRGSM. The span at 394 to 405 shows a compositional bias: acidic residues; it reads NEAEAEKDEEGE. A compositionally biased stretch (polar residues) spans 409–419; sequence LSVSQATRGSM.

Belongs to the inward rectifier-type potassium channel (TC 1.A.2.1) family. KCNJ5 subfamily. Associates with KCNJ3/GIRK1 to form a G-protein-activated heteromultimer pore-forming unit. Associates with KCNJ6/GRIK2 to form a G-protein-activated heteromultimer pore-forming unit. Expressed in the heart.

The protein resides in the membrane. It catalyses the reaction K(+)(in) = K(+)(out). With respect to regulation, heteromultimer composed of KCNJ3/GIRK1 and KCNJ5/GIRK4 is activated by phosphatidylinositol 4,5 biphosphate (PtdIns(4,5)P2). In terms of biological role, inward rectifier potassium channels are characterized by a greater tendency to allow potassium to flow into the cell rather than out of it. Their voltage dependence is regulated by the concentration of extracellular potassium; as external potassium is raised, the voltage range of the channel opening shifts to more positive voltages. The inward rectification is mainly due to the blockage of outward current by internal magnesium. Can be blocked by external barium. This potassium channel is controlled by G proteins. Forms a functional channel in association with KCNJ3/GIRK1. The protein is G protein-activated inward rectifier potassium channel 4 (Kcnj5) of Mus musculus (Mouse).